Consider the following 601-residue polypeptide: uncharacterized protein (601 aa).

Residues 1 to 24 form the signal peptide; the sequence is MKLSSLPSGLGLASLLGLISSATA.

The protein localises to the membrane. This is an uncharacterized protein from Schizosaccharomyces pombe (strain 972 / ATCC 24843) (Fission yeast).